Here is a 951-residue protein sequence, read N- to C-terminus: Valine--tRNA ligase (951 aa).

Residues P42 to H52 carry the 'HIGH' region motif. The 'KMSKS' region signature appears at K554–S558. ATP is bound at residue K557. A coiled-coil region spans residues A880–Q944.

This sequence belongs to the class-I aminoacyl-tRNA synthetase family. ValS type 1 subfamily. In terms of assembly, monomer.

The protein localises to the cytoplasm. It catalyses the reaction tRNA(Val) + L-valine + ATP = L-valyl-tRNA(Val) + AMP + diphosphate. Functionally, catalyzes the attachment of valine to tRNA(Val). As ValRS can inadvertently accommodate and process structurally similar amino acids such as threonine, to avoid such errors, it has a 'posttransfer' editing activity that hydrolyzes mischarged Thr-tRNA(Val) in a tRNA-dependent manner. This Escherichia coli O6:H1 (strain CFT073 / ATCC 700928 / UPEC) protein is Valine--tRNA ligase.